The chain runs to 271 residues: Thiazole synthase (271 aa).

The Schiff-base intermediate with DXP role is filled by Lys108. 1-deoxy-D-xylulose 5-phosphate is bound by residues Gly169, 195-196 (AG), and 217-218 (NS).

This sequence belongs to the ThiG family. Homotetramer. Forms heterodimers with either ThiH or ThiS.

It localises to the cytoplasm. It carries out the reaction [ThiS sulfur-carrier protein]-C-terminal-Gly-aminoethanethioate + 2-iminoacetate + 1-deoxy-D-xylulose 5-phosphate = [ThiS sulfur-carrier protein]-C-terminal Gly-Gly + 2-[(2R,5Z)-2-carboxy-4-methylthiazol-5(2H)-ylidene]ethyl phosphate + 2 H2O + H(+). Its pathway is cofactor biosynthesis; thiamine diphosphate biosynthesis. In terms of biological role, catalyzes the rearrangement of 1-deoxy-D-xylulose 5-phosphate (DXP) to produce the thiazole phosphate moiety of thiamine. Sulfur is provided by the thiocarboxylate moiety of the carrier protein ThiS. In vitro, sulfur can be provided by H(2)S. In Prochlorococcus marinus (strain SARG / CCMP1375 / SS120), this protein is Thiazole synthase.